The chain runs to 165 residues: IQSTSMDQGSLSEDSMNSFIRTLIQAGIWKNKVPKQTARTKDGMQTTVKEAEAEPGAVANKGVRLGSQPVVSVDTELLRQQRRFSSPRVLLSENAPLEPPPLYLMEEPMVLNQTSRRKRFAEGKSHRGEYSVCDSESRWVTDKSSAVDIRGHQVTVLGEIRMGSS.

A signal peptide spans 1 to 3 (IQS). A propeptide spanning residues 4–119 (TSMDQGSLSE…VLNQTSRRKR (116 aa)) is cleaved from the precursor. Residue Asn-112 is glycosylated (N-linked (GlcNAc...) asparagine).

Belongs to the NGF-beta family.

The protein localises to the secreted. In terms of biological role, seems to promote the survival of visceral and proprioceptive sensory neurons. The polypeptide is Neurotrophin-3 (NTF3) (Morelia spilota (Carpet python)).